Reading from the N-terminus, the 133-residue chain is Large-conductance mechanosensitive channel (133 aa).

A run of 2 helical transmembrane segments spans residues Ala17–Phe37 and Ile73–Ala93.

It belongs to the MscL family. Homopentamer.

It localises to the cell inner membrane. In terms of biological role, channel that opens in response to stretch forces in the membrane lipid bilayer. May participate in the regulation of osmotic pressure changes within the cell. This is Large-conductance mechanosensitive channel from Synechococcus elongatus (strain ATCC 33912 / PCC 7942 / FACHB-805) (Anacystis nidulans R2).